A 227-amino-acid chain; its full sequence is Cytochrome c oxidase subunit 2 (227 aa).

Residues 1-14 (MAHPVQLGLQDATS) lie on the Mitochondrial intermembrane side of the membrane. Residues 15 to 45 (PVMEELITFHDQALMAMFLISFLILYALSST) traverse the membrane as a helical segment. Residues 46-59 (LTTKLTNTNITDAQ) lie on the Mitochondrial matrix side of the membrane. Residues 60 to 87 (EMETIWTILPAVILILIALPSLRILYMT) form a helical membrane-spanning segment. Residues 88-227 (DEINNPSFTI…IFEMGPVFTL (140 aa)) lie on the Mitochondrial intermembrane side of the membrane. Residues His161, Cys196, Glu198, Cys200, His204, and Met207 each coordinate Cu cation. Residue Glu198 coordinates Mg(2+).

This sequence belongs to the cytochrome c oxidase subunit 2 family. In terms of assembly, component of the cytochrome c oxidase (complex IV, CIV), a multisubunit enzyme composed of 14 subunits. The complex is composed of a catalytic core of 3 subunits MT-CO1, MT-CO2 and MT-CO3, encoded in the mitochondrial DNA, and 11 supernumerary subunits COX4I, COX5A, COX5B, COX6A, COX6B, COX6C, COX7A, COX7B, COX7C, COX8 and NDUFA4, which are encoded in the nuclear genome. The complex exists as a monomer or a dimer and forms supercomplexes (SCs) in the inner mitochondrial membrane with NADH-ubiquinone oxidoreductase (complex I, CI) and ubiquinol-cytochrome c oxidoreductase (cytochrome b-c1 complex, complex III, CIII), resulting in different assemblies (supercomplex SCI(1)III(2)IV(1) and megacomplex MCI(2)III(2)IV(2)). Found in a complex with TMEM177, COA6, COX18, COX20, SCO1 and SCO2. Interacts with TMEM177 in a COX20-dependent manner. Interacts with COX20. Interacts with COX16. Cu cation is required as a cofactor.

Its subcellular location is the mitochondrion inner membrane. It carries out the reaction 4 Fe(II)-[cytochrome c] + O2 + 8 H(+)(in) = 4 Fe(III)-[cytochrome c] + 2 H2O + 4 H(+)(out). Functionally, component of the cytochrome c oxidase, the last enzyme in the mitochondrial electron transport chain which drives oxidative phosphorylation. The respiratory chain contains 3 multisubunit complexes succinate dehydrogenase (complex II, CII), ubiquinol-cytochrome c oxidoreductase (cytochrome b-c1 complex, complex III, CIII) and cytochrome c oxidase (complex IV, CIV), that cooperate to transfer electrons derived from NADH and succinate to molecular oxygen, creating an electrochemical gradient over the inner membrane that drives transmembrane transport and the ATP synthase. Cytochrome c oxidase is the component of the respiratory chain that catalyzes the reduction of oxygen to water. Electrons originating from reduced cytochrome c in the intermembrane space (IMS) are transferred via the dinuclear copper A center (CU(A)) of subunit 2 and heme A of subunit 1 to the active site in subunit 1, a binuclear center (BNC) formed by heme A3 and copper B (CU(B)). The BNC reduces molecular oxygen to 2 water molecules using 4 electrons from cytochrome c in the IMS and 4 protons from the mitochondrial matrix. This is Cytochrome c oxidase subunit 2 (MT-CO2) from Papio anubis (Olive baboon).